Reading from the N-terminus, the 743-residue chain is MNAESGENAGGGCPLGHGAGAPRKRPSNRDWWPEALSLTSLNQHSPRSNPYGGDFDYAAEFNSLDLDAVIADLHKVMTDSQDWWPADFGHYGGLFIRMAWHSAGTYRITDGRGGAGGGQQRFAPLNSWPDNASLDKARRLLWPIKQKYGRKLSWADLFVLTGNVALESMGFKTFGFGGGRADTWEPEELFWGPEGTWLGDERYSGERQLHPGLGAVQMGLIYVNPEGPNGNPDPKAAAVDIRETFARMAMNDYETVALIAGGHTFGKTHGAGDPSFIGPEPEGALIEDQGLGWRSKFQTGIGPDAITSGLEVIWSQTPVKWSNYFFENLFNFEWELTKSPAGAHQWVAKDAPEIIPDPFDPNKKRKPTMLTTDLSLRFDPIYEPISRHFLENPDEFADAFARAWFKLTHRDMGPIARYLGPLVPKEQLIWQDPIPERDHPVIDDADIASLKQKILGLGFSVSDLVSVAWASAATYRGSDKRGGANGARIRFAPQKDWEINNPPLLAQVLQKLGEIQSDFNGSATGGKKVSMADLIVLAGCAAIEKAAQDGGVNVAVPFTPGRMDALEEWTDAQSFEALRPVADGFRNYYHESHFMAPEEALVDKAHLLRLSAPEMTVLVGGMRVLGANAGGSQDGVFTHRVGVLSNDFFVNLLDMKNEWTATEHKNRFQGLDRKTRQPTWTATRVDLIFGSQSELRAQAEVYGMADGNEKFVRDFAKAWDKVMNADRMDIGKPADQFSQKLSA.

A disordered region spans residues 1-29; it reads MNAESGENAGGGCPLGHGAGAPRKRPSNR. Gly residues predominate over residues 8–19; sequence NAGGGCPLGHGA. The tryptophyl-tyrosyl-methioninium (Trp-Tyr) (with M-248) cross-link spans 100 to 222; the sequence is WHSAGTYRIT…LGAVQMGLIY (123 aa). The Proton acceptor role is filled by histidine 101. The tryptophyl-tyrosyl-methioninium (Tyr-Met) (with W-100) cross-link spans 222–248; sequence YVNPEGPNGNPDPKAAAVDIRETFARM. Histidine 263 is a heme b binding site.

The protein belongs to the peroxidase family. Peroxidase/catalase subfamily. As to quaternary structure, homodimer or homotetramer. Heme b serves as cofactor. Formation of the three residue Trp-Tyr-Met cross-link is important for the catalase, but not the peroxidase activity of the enzyme.

The enzyme catalyses H2O2 + AH2 = A + 2 H2O. The catalysed reaction is 2 H2O2 = O2 + 2 H2O. In terms of biological role, bifunctional enzyme with both catalase and broad-spectrum peroxidase activity. The protein is Catalase-peroxidase of Stutzerimonas stutzeri (strain A1501) (Pseudomonas stutzeri).